The following is a 244-amino-acid chain: Venom nerve growth factor 1 (244 aa).

An N-terminal signal peptide occupies residues 1 to 18 (MSMLCYTLIIAFLIGIWA). A propeptide spanning residues 19 to 125 (APKSEDNVPL…TLNRNIRAKR (107 aa)) is cleaved from the precursor. The span at 47–66 (GLKTSRNTDQRHPAPKKAED) shows a compositional bias: basic and acidic residues. Residues 47-67 (GLKTSRNTDQRHPAPKKAEDQ) form a disordered region. 3 disulfide bridges follow: Cys139–Cys205, Cys181–Cys233, and Cys193–Cys235.

It belongs to the NGF-beta family. As to quaternary structure, homodimer; non-covalently linked. As to expression, expressed by the venom gland.

The protein localises to the secreted. In terms of biological role, nerve growth factor is important for the development and maintenance of the sympathetic and sensory nervous systems. It stimulates division and differentiation of sympathetic and embryonic sensory neurons as well as basal forebrain cholinergic neurons in the brain. Its relevance in the snake venom is not clear. However, it has been shown to inhibit metalloproteinase-dependent proteolysis of platelet glycoprotein Ib alpha, suggesting a metalloproteinase inhibition to prevent metalloprotease autodigestion and/or protection against prey proteases. Binds a lipid between the two protein chains in the homodimer. The lipid-bound form promotes histamine relase from mouse mast cells, contrary to the lipid-free form. This Notechis scutatus scutatus (Mainland tiger snake) protein is Venom nerve growth factor 1.